The primary structure comprises 142 residues: MKTFTAKPETVKRDWYVVDANGKTLGRLATELASRLRGKHKAEYTPHVDTGDYIIVLNAEKVAVTGNKRTDKIYYRHTGHIGGIKQATFEEMIARSPERVIEIAVKGMLPKGPLGRAMYRKLKVYAGTEHNHAAQQPQVLDI.

It belongs to the universal ribosomal protein uL13 family. Part of the 50S ribosomal subunit.

This protein is one of the early assembly proteins of the 50S ribosomal subunit, although it is not seen to bind rRNA by itself. It is important during the early stages of 50S assembly. This is Large ribosomal subunit protein uL13 from Yersinia enterocolitica serotype O:8 / biotype 1B (strain NCTC 13174 / 8081).